Consider the following 291-residue polypeptide: ATP synthase gamma chain (291 aa).

This sequence belongs to the ATPase gamma chain family. In terms of assembly, F-type ATPases have 2 components, CF(1) - the catalytic core - and CF(0) - the membrane proton channel. CF(1) has five subunits: alpha(3), beta(3), gamma(1), delta(1), epsilon(1). CF(0) has three main subunits: a, b and c.

It localises to the cell membrane. Its function is as follows. Produces ATP from ADP in the presence of a proton gradient across the membrane. The gamma chain is believed to be important in regulating ATPase activity and the flow of protons through the CF(0) complex. In Buchnera aphidicola subsp. Baizongia pistaciae (strain Bp), this protein is ATP synthase gamma chain.